The following is a 189-amino-acid chain: Tumor protein p53-inducible protein 11 (189 aa).

Residues 1–63 (MAAKQPPPLM…FAVREPLGLR (63 aa)) are Cytoplasmic-facing. S14 carries the phosphoserine modification. The chain crosses the membrane as a helical span at residues 64–84 (VWQFVSAVLFSGIAIMALAFP). Residues 85–108 (DQLYDAVFDGAQVTSKTPIRLYGG) are Extracellular-facing. Residues 109–129 (ALLSISLIMWNALYTAEKVII) traverse the membrane as a helical segment. Position 130 (R130) is a topological domain, cytoplasmic. The helical transmembrane segment at 131–151 (WTLLTEACYFSVQFLVVTATL) threads the bilayer. Topologically, residues 152–159 (AETGLASQ) are extracellular. A helical transmembrane segment spans residues 160–180 (GILLLLASRLLFVAISVYYYY). At 181–189 (QVGRKPKKV) the chain is on the cytoplasmic side.

The protein resides in the membrane. This Bos taurus (Bovine) protein is Tumor protein p53-inducible protein 11 (TP53I11).